The chain runs to 224 residues: UPF0758 protein AFE_0358 (224 aa).

The MPN domain occupies 102-224 (GLDSPLRVRQ…PLSLREQGGW (123 aa)). Zn(2+) contacts are provided by His-173, His-175, and Asp-186. The JAMM motif motif lies at 173 to 186 (HNHPSGVAEPSAAD).

Belongs to the UPF0758 family.

This Acidithiobacillus ferrooxidans (strain ATCC 23270 / DSM 14882 / CIP 104768 / NCIMB 8455) (Ferrobacillus ferrooxidans (strain ATCC 23270)) protein is UPF0758 protein AFE_0358.